We begin with the raw amino-acid sequence, 727 residues long: NHL repeat-containing protein 2 (727 aa).

The 156-residue stretch at 43–198 folds into the Thioredoxin domain; that stretch reads RERDLTVPEL…TLKFYKERGQ (156 aa). 6 NHL repeats span residues 207–249, 260–302, 330–364, 404–434, 456–500, and 513–557; these read KLYK…TLKN, NSGR…IDLE, ISSP…VWAL, FAQP…VRMI, AFGD…VDPK, and ASNV…LDLE.

As to quaternary structure, monomer.

It is found in the cytoplasm. The protein localises to the cytosol. Required for normal embryonic development. This chain is NHL repeat-containing protein 2 (NHLRC2), found in Gallus gallus (Chicken).